We begin with the raw amino-acid sequence, 44 residues long: Cytochrome b559 subunit beta (44 aa).

Residues 19 to 35 (WVSIHALAVPTIFFLGS) form a helical membrane-spanning segment. Histidine 23 provides a ligand contact to heme.

Belongs to the PsbE/PsbF family. Heterodimer of an alpha subunit and a beta subunit. PSII is composed of 1 copy each of membrane proteins PsbA, PsbB, PsbC, PsbD, PsbE, PsbF, PsbH, PsbI, PsbJ, PsbK, PsbL, PsbM, PsbT, PsbX, PsbY, PsbZ, Psb30/Ycf12, at least 3 peripheral proteins of the oxygen-evolving complex and a large number of cofactors. It forms dimeric complexes. Requires heme b as cofactor.

It localises to the plastid. The protein resides in the chloroplast thylakoid membrane. In terms of biological role, this b-type cytochrome is tightly associated with the reaction center of photosystem II (PSII). PSII is a light-driven water:plastoquinone oxidoreductase that uses light energy to abstract electrons from H(2)O, generating O(2) and a proton gradient subsequently used for ATP formation. It consists of a core antenna complex that captures photons, and an electron transfer chain that converts photonic excitation into a charge separation. In Chlamydomonas moewusii (Chlamydomonas eugametos), this protein is Cytochrome b559 subunit beta.